Reading from the N-terminus, the 360-residue chain is NADH-quinone oxidoreductase subunit H (360 aa).

The next 8 membrane-spanning stretches (helical) occupy residues 20 to 40 (GMVW…IPLM), 95 to 115 (GLFV…WVVI), 130 to 150 (LLLV…AGWA), 176 to 196 (FCLL…IVLA), 206 to 226 (GIGF…VYLI), 261 to 281 (IFFL…ALMF), 297 to 317 (IPGW…FIWI), and 336 to 356 (IFIP…LSPW).

The protein belongs to the complex I subunit 1 family. As to quaternary structure, NDH-1 is composed of 14 different subunits. Subunits NuoA, H, J, K, L, M, N constitute the membrane sector of the complex.

It is found in the cell inner membrane. The enzyme catalyses a quinone + NADH + 5 H(+)(in) = a quinol + NAD(+) + 4 H(+)(out). NDH-1 shuttles electrons from NADH, via FMN and iron-sulfur (Fe-S) centers, to quinones in the respiratory chain. The immediate electron acceptor for the enzyme in this species is believed to be ubiquinone. Couples the redox reaction to proton translocation (for every two electrons transferred, four hydrogen ions are translocated across the cytoplasmic membrane), and thus conserves the redox energy in a proton gradient. This subunit may bind ubiquinone. The protein is NADH-quinone oxidoreductase subunit H of Verminephrobacter eiseniae (strain EF01-2).